The chain runs to 256 residues: UPF0280 protein MTH_727 (256 aa).

Belongs to the UPF0280 family.

This chain is UPF0280 protein MTH_727, found in Methanothermobacter thermautotrophicus (strain ATCC 29096 / DSM 1053 / JCM 10044 / NBRC 100330 / Delta H) (Methanobacterium thermoautotrophicum).